A 193-amino-acid chain; its full sequence is Naphthalene 1,2-dioxygenase system, small oxygenase component (193 aa).

This sequence belongs to the bacterial ring-hydroxylating dioxygenase beta subunit family. The naphthalene dioxygenase (NDO) multicomponent enzyme system is composed of an electron transfer component and a dioxygenase component (iron sulfur protein (ISP)). The electron transfer component is composed of a ferredoxin reductase (NdoR) and a ferredoxin (NdoA), and the dioxygenase component is formed of a heterohexamer (trimer of heterodimers) of three large alpha subunits (NdoB) and three small beta subunits (NdoC).

It participates in aromatic compound metabolism; naphthalene degradation. Functionally, component of the naphthalene dioxygenase (NDO) multicomponent enzyme system which catalyzes the incorporation of both atoms of molecular oxygen into naphthalene to form cis-(1R,2S)-dihydroxy-1,2-dihydronaphthalene. The beta subunit seems to have a structural role in the holoenzyme. In Pseudomonas aeruginosa, this protein is Naphthalene 1,2-dioxygenase system, small oxygenase component.